The chain runs to 276 residues: 2,3,4,5-tetrahydropyridine-2,6-dicarboxylate N-succinyltransferase (276 aa).

Residues Arg-107 and Asp-144 each contribute to the substrate site.

It belongs to the transferase hexapeptide repeat family. As to quaternary structure, homotrimer.

The protein resides in the cytoplasm. It carries out the reaction (S)-2,3,4,5-tetrahydrodipicolinate + succinyl-CoA + H2O = (S)-2-succinylamino-6-oxoheptanedioate + CoA. It participates in amino-acid biosynthesis; L-lysine biosynthesis via DAP pathway; LL-2,6-diaminopimelate from (S)-tetrahydrodipicolinate (succinylase route): step 1/3. The chain is 2,3,4,5-tetrahydropyridine-2,6-dicarboxylate N-succinyltransferase from Gluconobacter oxydans (strain 621H) (Gluconobacter suboxydans).